The chain runs to 678 residues: Catalase (678 aa).

The span at 1–26 (MSNEREMQNKKDQQLESFRVEDEGKK) shows a compositional bias: basic and acidic residues. The disordered stretch occupies residues 1 to 32 (MSNEREMQNKKDQQLESFRVEDEGKKLTTNQG). Active-site residues include H75 and N148. Y362 provides a ligand contact to heme.

It belongs to the catalase family. HPII subfamily. Heme is required as a cofactor.

It localises to the cytoplasm. It catalyses the reaction 2 H2O2 = O2 + 2 H2O. Functionally, decomposes hydrogen peroxide into water and oxygen; serves to protect cells from the toxic effects of hydrogen peroxide. The chain is Catalase (katE) from Alkalihalophilus pseudofirmus (strain ATCC BAA-2126 / JCM 17055 / OF4) (Bacillus pseudofirmus).